A 469-amino-acid chain; its full sequence is MGKGAIKEEESEKKRKTWRWPLATLVVVFLAVAVSSRTNSNVGFFFSDRNSCSCSLQKTGKYKGMIEDCCCDYETVDNLNTEVLNPLLQDLVTTPFFRYYKVKLWCDCPFWPDDGMCRLRDCSVCECPENEFPEPFKKPFVPGLPSDDLKCQEGKPQGAVDRTIDNRAFRGWVETKNPWTHDDDTDSGEMSYVNLQLNPERYTGYTGPSARRIWDSIYSENCPKYSSGETCPEKKVLYKLISGLHSSISMHIAADYLLDESRNQWGQNIELMYDRILRHPDRVRNMYFTYLFVLRAVTKATAYLEQAEYDTGNHAEDLKTQSLIKQLLYSPKLQTACPVPFDEAKLWQGQSGPELKQQIQKQFRNISALMDCVGCEKCRLWGKLQVQGLGTALKILFSVGNQDIGDQTLQLQRNEVIALVNLLNRLSESVKMVHDMSPDVERLMEDQIAKVSAKPARLRRIWDLAVSFW.

The N-terminal stretch at 1-36 (MGKGAIKEEESEKKRKTWRWPLATLVVVFLAVAVSS) is a signal peptide. 6 disulfide bridges follow: Cys-52–Cys-71, Cys-54–Cys-69, Cys-108–Cys-372, Cys-117–Cys-122, Cys-222–Cys-231, and Cys-375–Cys-378. FAD contacts are provided by Arg-201, Thr-203, and Trp-214. 4 residues coordinate FAD: Ser-242, His-245, Arg-275, and Arg-282. Asn-365 carries N-linked (GlcNAc...) asparagine glycosylation.

It belongs to the EROs family. In terms of assembly, may function both as a monomer and a homodimer. It depends on FAD as a cofactor. In terms of processing, N-glycosylated.

The protein resides in the endoplasmic reticulum membrane. Its function is as follows. Essential oxidoreductase that oxidizes proteins in the endoplasmic reticulum to produce disulfide bonds. Acts by oxidizing directly PDI isomerase through a direct disulfide exchange. Does not act as a direct oxidant of folding substrate, but relies on PDI to transfer oxidizing equivalent. Does not oxidize all PDI related proteins, suggesting that it can discriminate between PDI and related proteins. Its reoxidation probably involves electron transfer to molecular oxygen via FAD. Acts independently of glutathione. May be responsible for a significant proportion of reactive oxygen species (ROS) in the cell, thereby being a source of oxidative stress. The polypeptide is Endoplasmic reticulum oxidoreductin-1 (AERO1) (Arabidopsis thaliana (Mouse-ear cress)).